A 207-amino-acid chain; its full sequence is Protein lin-7 homolog B (207 aa).

The short motif at 1 to 13 (MAALVEPLGLERD) is the Kinase interacting site element. The L27 domain maps to 10–65 (LERDVSRAVELLERLQRSGELPPQKLQALQRVLQSRFCSAIREVYEQLYDTLDITG). Residues 93–175 (VVELPKTDEG…SVKLVVRYTP (83 aa)) enclose the PDZ domain. The interval 187 to 207 (KMRSARRRQQHHSYTSLESRG) is disordered. The segment covering 198-207 (HSYTSLESRG) has biased composition (polar residues).

The protein belongs to the lin-7 family. As to quaternary structure, forms a complex with CASK and CASKIN1. Component of the brain-specific heterotrimeric complex (LIN-10-LIN-2-LIN-7 complex) composed of at least APBA1, CASK, and LIN7, which associates with the motor protein KIF17 to transport vesicles along microtubules. Forms a heterotrimeric complex composed of MMP5, LIN7B and PATJ; the N-terminal L27 domain of PALS1 interacts with the L27 domain of PATJ and the C-terminal L27 domain of PALS1 interacts with the L27 domain of LIN7B. Forms a heterotrimeric complex with DLG1 and CASK via their L27 domains. Interacts with DLG4 and GRIN2B as well as CDH1 and CTNNB1, the channels KCNJ12/Kir2.2, KCNJ4/Kir2.3 and probably KCNJ2/Kir2.1 and SLC6A12/BGT-1 via its PDZ domain. The association of LIN7A with cadherin and beta-catenin is calcium-dependent, occurs at synaptic junctions and requires the actin cytoskeleton. Interacts with EGFR, ERBB2, ERBB3 and ERBB4 with both PDZ and KID domains. Associates with KIF17 via APBA1. Interacts with ASIC3. Interacts with TOPK. Interacts with RTKN. Interacts with APBA1. Interacts with MPP7. Interacts with DLG2. Interacts with DLG3. As to expression, expressed in the kidney; predominantly in the vasa recta.

The protein resides in the cell membrane. It is found in the basolateral cell membrane. It localises to the cell junction. The protein localises to the postsynaptic density membrane. Its subcellular location is the tight junction. In terms of biological role, plays a role in establishing and maintaining the asymmetric distribution of channels and receptors at the plasma membrane of polarized cells. Forms membrane-associated multiprotein complexes that may regulate delivery and recycling of proteins to the correct membrane domains. The tripartite complex composed of LIN7 (LIN7A, LIN7B or LIN7C), CASK and APBA1 associates with the motor protein KIF17 to transport vesicles containing N-methyl-D-aspartate (NMDA) receptor subunit NR2B along microtubules. This complex may have the potential to couple synaptic vesicle exocytosis to cell adhesion in brain. Ensures the proper localization of GRIN2B (subunit 2B of the NMDA receptor) to neuronal postsynaptic density and may function in localizing synaptic vesicles at synapses where it is recruited by beta-catenin and cadherin. Required to localize Kir2 channels, GABA transporter (SLC6A12) and EGFR/ERBB1, ERBB2, ERBB3 and ERBB4 to the basolateral membrane of epithelial cells. May increase the amplitude of ASIC3 acid-evoked currents by stabilizing the channel at the cell surface. This Mus musculus (Mouse) protein is Protein lin-7 homolog B (Lin7b).